Consider the following 300-residue polypeptide: Putative hydro-lyase Dshi_3152 (300 aa).

The protein belongs to the D-glutamate cyclase family.

This Dinoroseobacter shibae (strain DSM 16493 / NCIMB 14021 / DFL 12) protein is Putative hydro-lyase Dshi_3152.